The following is a 301-amino-acid chain: Golgi to ER traffic protein 2 (301 aa).

The Cytoplasmic portion of the chain corresponds to 1-167 (MSEPVVDTAE…LEYNTYNQKL (167 aa)). Low complexity predominate over residues 42 to 55 (SQGSSVKTSGVKSV). Positions 42–93 (SQGSSVKTSGVKSVLDQEKEATSSHDDDPEIQDITEITTPPPRTPPIGEDAP) are disordered. Basic and acidic residues predominate over residues 56–67 (LDQEKEATSSHD). The helical transmembrane segment at 168-188 (WKFRFLLVRVLVTLFNFFYHY) threads the bilayer. Topologically, residues 189–214 (TSISDFHASNYAYVRDLSSEEYPVRD) are lumenal. A helical membrane pass occupies residues 215-234 (FFTWFATSEVVLVAAYYSVF). Topologically, residues 235 to 278 (HSLGLFHAANQNSIILKVMSMGSMILPQLESYKPLVARFLGYYE) are cytoplasmic. Residues 279-299 (LLGIVLGGLSLVIVLFGLLSF) form a helical membrane-spanning segment. The Lumenal segment spans residues 300–301 (AN).

The protein belongs to the GET2 family. In terms of assembly, component of the Golgi to ER traffic (GET) complex, which is composed of GET1, GET2 and GET3. Within the complex, GET1 and GET2 form a heterotetramer which is stabilized by phosphatidylinositol binding and which binds to the GET3 homodimer.

The protein localises to the endoplasmic reticulum membrane. It is found in the golgi apparatus membrane. Functionally, required for the post-translational delivery of tail-anchored (TA) proteins to the endoplasmic reticulum. Together with GET1, acts as a membrane receptor for soluble GET3, which recognizes and selectively binds the transmembrane domain of TA proteins in the cytosol. The GET complex cooperates with the HDEL receptor ERD2 to mediate the ATP-dependent retrieval of resident ER proteins that contain a C-terminal H-D-E-L retention signal from the Golgi to the ER. This Candida dubliniensis (strain CD36 / ATCC MYA-646 / CBS 7987 / NCPF 3949 / NRRL Y-17841) (Yeast) protein is Golgi to ER traffic protein 2.